The primary structure comprises 380 residues: Heme A synthase (380 aa).

Helical transmembrane passes span 36–56, 125–145, 151–171, 187–207, 227–247, 287–307, 320–340, and 344–364; these read IRAW…VGGL, VIGL…KIPA, LILP…MVAS, LATH…SILQ, FGLA…GALV, LVQF…VMVW, FAFN…IVTV, and APWQ…VLIL. His292 is a binding site for heme. His352 serves as a coordination point for heme.

This sequence belongs to the COX15/CtaA family. Type 2 subfamily. As to quaternary structure, interacts with CtaB. Heme b serves as cofactor.

It localises to the cell membrane. The catalysed reaction is Fe(II)-heme o + 2 A + H2O = Fe(II)-heme a + 2 AH2. The protein operates within porphyrin-containing compound metabolism; heme A biosynthesis; heme A from heme O: step 1/1. Its function is as follows. Catalyzes the conversion of heme O to heme A by two successive hydroxylations of the methyl group at C8. The first hydroxylation forms heme I, the second hydroxylation results in an unstable dihydroxymethyl group, which spontaneously dehydrates, resulting in the formyl group of heme A. This chain is Heme A synthase, found in Ruegeria pomeroyi (strain ATCC 700808 / DSM 15171 / DSS-3) (Silicibacter pomeroyi).